We begin with the raw amino-acid sequence, 213 residues long: Large ribosomal subunit protein uL4 (213 aa).

Positions 51–90 (TASTLTKAEVRGGGRKPYKQKHTGRARQGSIRNPHYVGGG) are disordered. A compositionally biased stretch (basic residues) spans 63 to 75 (GGRKPYKQKHTGR).

This sequence belongs to the universal ribosomal protein uL4 family. Part of the 50S ribosomal subunit.

One of the primary rRNA binding proteins, this protein initially binds near the 5'-end of the 23S rRNA. It is important during the early stages of 50S assembly. It makes multiple contacts with different domains of the 23S rRNA in the assembled 50S subunit and ribosome. Its function is as follows. Forms part of the polypeptide exit tunnel. This chain is Large ribosomal subunit protein uL4, found in Malacoplasma penetrans (strain HF-2) (Mycoplasma penetrans).